The sequence spans 523 residues: Ubiquitin carboxyl-terminal hydrolase 22-A (523 aa).

The segment at 4 to 121 adopts a UBP-type zinc-finger fold; the sequence is AGCSHVNSFK…KEEQRKAWKL (118 aa). Positions 6, 8, 46, 49, 59, 62, 67, 72, 76, 82, 95, and 98 each coordinate Zn(2+). Positions 174 to 518 constitute a USP domain; the sequence is RGLINLGNTC…EGYLLFYHKQ (345 aa). Cysteine 183 serves as the catalytic Nucleophile. The active-site Proton acceptor is histidine 477.

It belongs to the peptidase C19 family. UBP8 subfamily. In terms of assembly, component of some SAGA transcription coactivator-HAT complexes.

Its subcellular location is the nucleus. It catalyses the reaction Thiol-dependent hydrolysis of ester, thioester, amide, peptide and isopeptide bonds formed by the C-terminal Gly of ubiquitin (a 76-residue protein attached to proteins as an intracellular targeting signal).. Functionally, histone deubiquitinating component of the transcription regulatory histone acetylation (HAT) complex SAGA. Catalyzes the deubiquitination of both histones H2A and H2B, thereby acting as a coactivator. Recruited to specific gene promoters by activators, where it is required for transcription. The polypeptide is Ubiquitin carboxyl-terminal hydrolase 22-A (usp22-a) (Xenopus laevis (African clawed frog)).